The following is a 231-amino-acid chain: ATP phosphoribosyltransferase (231 aa).

The protein belongs to the ATP phosphoribosyltransferase family. Short subfamily. As to quaternary structure, heteromultimer composed of HisG and HisZ subunits.

It is found in the cytoplasm. It carries out the reaction 1-(5-phospho-beta-D-ribosyl)-ATP + diphosphate = 5-phospho-alpha-D-ribose 1-diphosphate + ATP. It functions in the pathway amino-acid biosynthesis; L-histidine biosynthesis; L-histidine from 5-phospho-alpha-D-ribose 1-diphosphate: step 1/9. Its function is as follows. Catalyzes the condensation of ATP and 5-phosphoribose 1-diphosphate to form N'-(5'-phosphoribosyl)-ATP (PR-ATP). Has a crucial role in the pathway because the rate of histidine biosynthesis seems to be controlled primarily by regulation of HisG enzymatic activity. This chain is ATP phosphoribosyltransferase, found in Sinorhizobium medicae (strain WSM419) (Ensifer medicae).